The following is a 362-amino-acid chain: tRNA/tmRNA (uracil-C(5))-methyltransferase (362 aa).

Gln-182, Tyr-210, Asn-215, Glu-231, and Asp-293 together coordinate S-adenosyl-L-methionine. The active-site Nucleophile is Cys-318. Glu-352 functions as the Proton acceptor in the catalytic mechanism.

This sequence belongs to the class I-like SAM-binding methyltransferase superfamily. RNA M5U methyltransferase family. TrmA subfamily.

The catalysed reaction is uridine(54) in tRNA + S-adenosyl-L-methionine = 5-methyluridine(54) in tRNA + S-adenosyl-L-homocysteine + H(+). It carries out the reaction uridine(341) in tmRNA + S-adenosyl-L-methionine = 5-methyluridine(341) in tmRNA + S-adenosyl-L-homocysteine + H(+). Functionally, dual-specificity methyltransferase that catalyzes the formation of 5-methyluridine at position 54 (m5U54) in all tRNAs, and that of position 341 (m5U341) in tmRNA (transfer-mRNA). This is tRNA/tmRNA (uracil-C(5))-methyltransferase from Neisseria meningitidis serogroup B (strain ATCC BAA-335 / MC58).